Consider the following 127-residue polypeptide: Fluoride-specific ion channel FluC (127 aa).

A run of 4 helical transmembrane segments spans residues 7–27, 37–57, 70–90, and 102–122; these read LFLI…LTLL, FGTL…LAMF, FFVT…AEVI, and ITIT…GVFI. Residues Gly-77 and Thr-80 each contribute to the Na(+) site.

It belongs to the fluoride channel Fluc/FEX (TC 1.A.43) family.

It is found in the cell inner membrane. The enzyme catalyses fluoride(in) = fluoride(out). Na(+) is not transported, but it plays an essential structural role and its presence is essential for fluoride channel function. Fluoride-specific ion channel. Important for reducing fluoride concentration in the cell, thus reducing its toxicity. The polypeptide is Fluoride-specific ion channel FluC (Histophilus somni (strain 129Pt) (Haemophilus somnus)).